A 484-amino-acid chain; its full sequence is RuvB-like helicase 1 (484 aa).

Over residues 1–11 (MSMAASSSTAT) the composition is skewed to low complexity. Residues 1–27 (MSMAASSSTATVQPSGIITQPPPPSTL) form a disordered region. An ATP-binding site is contributed by 87-94 (GPPGTGKT).

This sequence belongs to the RuvB family. In terms of assembly, may form heterododecamers with RVB2. Component of the SWR1 chromatin remodeling complex, the INO80 chromatin remodeling complex, and of the R2TP complex.

The protein resides in the nucleus. The enzyme catalyses ATP + H2O = ADP + phosphate + H(+). In terms of biological role, DNA helicase which participates in several chromatin remodeling complexes, including the SWR1 and the INO80 complexes. The SWR1 complex mediates the ATP-dependent exchange of histone H2A for the H2A variant HZT1 leading to transcriptional regulation of selected genes by chromatin remodeling. The INO80 complex remodels chromatin by shifting nucleosomes and is involved in DNA repair. Also involved in pre-rRNA processing. The chain is RuvB-like helicase 1 (RVB1) from Cryptococcus neoformans var. neoformans serotype D (strain B-3501A) (Filobasidiella neoformans).